Consider the following 41-residue polypeptide: Large ribosomal subunit protein bL36 (41 aa).

It belongs to the bacterial ribosomal protein bL36 family.

This Methylorubrum extorquens (strain CM4 / NCIMB 13688) (Methylobacterium extorquens) protein is Large ribosomal subunit protein bL36.